The following is a 419-amino-acid chain: UDP-N-acetylglucosamine 1-carboxyvinyltransferase (419 aa).

22–23 provides a ligand contact to phosphoenolpyruvate; that stretch reads KN. Arg-91 contributes to the UDP-N-acetyl-alpha-D-glucosamine binding site. Cys-115 serves as the catalytic Proton donor. Cys-115 bears the 2-(S-cysteinyl)pyruvic acid O-phosphothioketal mark. Residues 120–124, 160–163, Asp-305, and Ile-327 contribute to the UDP-N-acetyl-alpha-D-glucosamine site; these read RPVDL and KVSV.

Belongs to the EPSP synthase family. MurA subfamily.

Its subcellular location is the cytoplasm. The enzyme catalyses phosphoenolpyruvate + UDP-N-acetyl-alpha-D-glucosamine = UDP-N-acetyl-3-O-(1-carboxyvinyl)-alpha-D-glucosamine + phosphate. Its pathway is cell wall biogenesis; peptidoglycan biosynthesis. Cell wall formation. Adds enolpyruvyl to UDP-N-acetylglucosamine. The polypeptide is UDP-N-acetylglucosamine 1-carboxyvinyltransferase (Sodalis glossinidius (strain morsitans)).